The following is a 291-amino-acid chain: Undecaprenyl-diphosphatase (291 aa).

8 helical membrane-spanning segments follow: residues 1-21 (MFIIELIKGIILGIVEGLTEF), 48-68 (SAFTFKIVIQLGSVFAAAWVF), 102-122 (LHVLVGMVPAGILGLLFDDFI), 126-146 (LFSVPTVMIGLFVGAIYMIIA), 162-182 (ISYFQAFVIGISQAVAMWPGF), 203-223 (SDFTFIMAVPIMLAASGLSLL), 231-251 (IADIPFYILGFLAAFTVGLIA), and 267-287 (FAIYRIVLVIFIAILYFGFGI).

This sequence belongs to the UppP family.

It is found in the cell membrane. It carries out the reaction di-trans,octa-cis-undecaprenyl diphosphate + H2O = di-trans,octa-cis-undecaprenyl phosphate + phosphate + H(+). Its function is as follows. Catalyzes the dephosphorylation of undecaprenyl diphosphate (UPP). Confers resistance to bacitracin. This chain is Undecaprenyl-diphosphatase, found in Staphylococcus aureus (strain MRSA252).